The following is a 329-amino-acid chain: GTPase Obg (329 aa).

Residues 1 to 159 (MQFIDQAIID…WSLQLELKLL (159 aa)) form the Obg domain. An OBG-type G domain is found at 160-328 (AEVGIIGLPN…LLSSIWYELG (169 aa)). ATP-binding positions include 166–173 (GLPNAGKS), 191–195 (FTTLI), 213–216 (DIPG), 280–283 (NKKE), and 309–311 (SAV). Mg(2+)-binding residues include Ser-173 and Thr-193.

The protein belongs to the TRAFAC class OBG-HflX-like GTPase superfamily. OBG GTPase family. As to quaternary structure, monomer. The cofactor is Mg(2+).

The protein resides in the cytoplasm. Functionally, an essential GTPase which binds GTP, GDP and possibly (p)ppGpp with moderate affinity, with high nucleotide exchange rates and a fairly low GTP hydrolysis rate. Plays a role in control of the cell cycle, stress response, ribosome biogenesis and in those bacteria that undergo differentiation, in morphogenesis control. The sequence is that of GTPase Obg from Prochlorococcus marinus (strain NATL1A).